Reading from the N-terminus, the 315-residue chain is tRNA dimethylallyltransferase (315 aa).

ATP is bound at residue 13–20 (GPTASGKT). 15 to 20 (TASGKT) lines the substrate pocket. Interaction with substrate tRNA regions lie at residues 38–41 (DSAL), 162–166 (QRLSR), 243–248 (RCVGYR), and 276–283 (KRQITWLR).

The protein belongs to the IPP transferase family. As to quaternary structure, monomer. Mg(2+) serves as cofactor.

The catalysed reaction is adenosine(37) in tRNA + dimethylallyl diphosphate = N(6)-dimethylallyladenosine(37) in tRNA + diphosphate. Functionally, catalyzes the transfer of a dimethylallyl group onto the adenine at position 37 in tRNAs that read codons beginning with uridine, leading to the formation of N6-(dimethylallyl)adenosine (i(6)A). The protein is tRNA dimethylallyltransferase of Vibrio vulnificus (strain CMCP6).